The chain runs to 515 residues: MSQVELPLIDYAAITPILVILGAACLGVLVEAFLPRHQRWSAQVGLSLLALVAAGVALALHARQGGTGVTTLSDSLAIDAPTLFLWGTLLALGLGAILLIADRSVESGGAFVAESNDTGPAGAGEMTRATAAVAGMRTEVFPLALFALGGMMVFCAANDLLTMFIALEVLSLPLYLMCGLAKRRRLLSQEAAVKYFLLGAFASAFFLYGLALLYGYAGSVKLSAIAAATAGTDRSDTLLFAGLGLLVVGLLFKASVGPFHTWTPDVYQGAPTAVTGFMAACTKVAAFGGILRVLQVAFEASSWEWRGVLYAVAIVSMAIGVVLGLTQSDIKRMIAYSSVAHAGFLLVGSIALTERGLAGTMFYLLAYGFTTIAIFGVISLVRTSDGEATHLSDWAGLAKRSPVVAWVFTFLLLALAGIPMTSGFVGKFVVFEAALADGMAPLVVVALVASAVAAFFYLRVIVLMHFSEPAEDGPTVSVPGAFTTAAITLGVVVTLLLGVLPSLALDWANLGGFVS.

14 helical membrane passes run 14 to 34 (ITPI…EAFL), 40 to 60 (WSAQ…ALAL), 80 to 100 (APTL…ILLI), 138 to 158 (TEVF…CAAN), 160 to 180 (LLTM…MCGL), 195 to 215 (YFLL…LLYG), 239 to 259 (LFAG…VGPF), 271 to 291 (PTAV…GGIL), 307 to 327 (GVLY…GLTQ), 333 to 353 (MIAY…IALT), 361 to 381 (MFYL…ISLV), 404 to 424 (VAWV…TSGF), 438 to 458 (GMAP…FFYL), and 485 to 505 (AAIT…SLAL).

Belongs to the complex I subunit 2 family. In terms of assembly, NDH-1 is composed of 14 different subunits. Subunits NuoA, H, J, K, L, M, N constitute the membrane sector of the complex.

Its subcellular location is the cell membrane. It carries out the reaction a quinone + NADH + 5 H(+)(in) = a quinol + NAD(+) + 4 H(+)(out). In terms of biological role, NDH-1 shuttles electrons from NADH, via FMN and iron-sulfur (Fe-S) centers, to quinones in the respiratory chain. The immediate electron acceptor for the enzyme in this species is believed to be a menaquinone. Couples the redox reaction to proton translocation (for every two electrons transferred, four hydrogen ions are translocated across the cytoplasmic membrane), and thus conserves the redox energy in a proton gradient. The protein is NADH-quinone oxidoreductase subunit N of Saccharopolyspora erythraea (strain ATCC 11635 / DSM 40517 / JCM 4748 / NBRC 13426 / NCIMB 8594 / NRRL 2338).